We begin with the raw amino-acid sequence, 494 residues long: MFLAKSIVCLALLAVANAQFNTNYASGRSGMVHLFEWKWDDIAAECENFLGPYGYAGVQVSPVNENAVKDSRPWWERYQPISYKLVTRSGNEEQFASMVRRCNNVGVRIYVDVVFNHMAADGGTYGTGGSTASPSSKSYPGVPFSSLDFNPTCAISNYNDANQVRNCELVGLRDLNQGNSYVQEKIVEFLNHLIDLGVAGFRVDAAKHMWPADLGVIYGSLKNLNTDHGFESGAKAYIVQEVIDMGGEAISKSEYTGLGAITEFRHSDSIGKAFRGKNQLQYLVNWGVSWGFAASDRSLVFVDNHDNQRGHGAGGADVLTYKVPKQYKMASAFMLAHPFGTPRVMSSFSFTDTDQGPPTTDGQNIASPSFNSDNSCSGGWVCEHRWKQIYNMVGFRNAVGSDAIQNWWDNGSNQIAFSRGSKGFVAFNNDNYDLNSSVQTGLPAGTYCDVISGSKSGSSCTGKTVTVGSDGRANISIGSSEDDGVLAIHVNAKL.

An N-terminal signal peptide occupies residues 1-18; the sequence is MFLAKSIVCLALLAVANA. An intrachain disulfide couples C46 to C102. Residues N116, R165, and D174 each contribute to the Ca(2+) site. C153 and C167 are joined by a disulfide. Position 202 (R202) interacts with chloride. Residue D204 is the Nucleophile of the active site. H208 is a Ca(2+) binding site. E241 serves as the catalytic Proton donor. Chloride-binding residues include N304 and R343. The tract at residues 350-370 is disordered; sequence FTDTDQGPPTTDGQNIASPSF. Residues 351-363 are compositionally biased toward low complexity; the sequence is TDTDQGPPTTDGQ. Intrachain disulfides connect C376-C382 and C448-C460.

This sequence belongs to the glycosyl hydrolase 13 family. Monomer. Ca(2+) is required as a cofactor. Chloride serves as cofactor.

The enzyme catalyses Endohydrolysis of (1-&gt;4)-alpha-D-glucosidic linkages in polysaccharides containing three or more (1-&gt;4)-alpha-linked D-glucose units.. The protein is Alpha-amylase 2 (Amy58) of Drosophila ananassae (Fruit fly).